Here is a 61-residue protein sequence, read N- to C-terminus: Putative neurotoxin-D (61 aa).

An N-terminal signal peptide occupies residues 1–19; that stretch reads MRTTVAILLVLFALSAILA. 3 disulfides stabilise this stretch: cysteine 31-cysteine 51, cysteine 37-cysteine 56, and cysteine 39-cysteine 58.

In terms of tissue distribution, expressed by the venom gland.

The protein resides in the secreted. The sequence is that of Putative neurotoxin-D from Lychas mucronatus (Chinese swimming scorpion).